The following is a 1397-amino-acid chain: MSNGDVVVDADQQQAQAVVAPQQLELQIKLPSFIDQKGDLKIPSHYEETITDLKLTLTVIPKTRSLTNYLILIQGEHDVEQFGEIVTFGQIIEELALGEPECLQIQIREKPYNLAAVYEQIIRLREIVGLHYVDKVSQELGSCGGVTRFNSIKLDPVTARGEAEKSDTNEEEQEQGKGKVGKPNEKESGETKETDSQPELSREELLQLSDLVKEIEESPESINFTQATKFDNINGKVKIPLKSFAVSQWSPVPSFQKTKGDLLYLTVQTLENETFHITSHFTGFFVNKCSATTFNPALKTNEKGRYHKHYLLYELLAQLSPSFTKTIEDNEVKLSESTEHPETYLLPNNSFLAFPWVVNASDLKNIPDSSRSQLMLISNGVDGSEIIKEWNNDIQAMKELPSTNFQERLMRDKLIQKTLFDFSKTATETAINIIKGNIAPMNPGEEPDKLIYLKNGVFYSAGTSTVDVFDKTGGEEASRYVSSKDLAAIKIVNRHELKGISTLVTCIVDYMGKRIVCQAPVPGILDAAPPSEEEDDAGAEQEKKEEGKAEEDEEEEIMEKVLYGLSSDSQKILEDKSFEKPLKLLSEVFHLKPHGVKLSEQVKSEGDLVVSKDTKGLKGTDGRKYAIDLYRTTPRDIEFIEAHFKEGENDSYPHGEALIRHEAVNEWWKRKVSALFAAETEKLEKEGKLEKDGSKGTNSEEKSQIALPIDQVSFNPDAFSSDFESKEDRDEVREISKFIKEKLIPEFIEECQHQLAPFDGQQLSEQLHRYGINLRYLGYIAEQVLVKKAEYEESVEKTIKENEELVKVREAEKVEKDRREAEEAEKAKERAAAQPESSSDDKNQETIENSDAKSKENTESDDKDAEEQPVSKATYELVLANYDSLYRLAIQEMVARASKHVLRQIMKETPLELSAKAVAHFHNCLLGGEINTSPEAEIDPLEASFFSQSAISFAKLTHKDVVAQVAKEVGSRFRFTLEENWIEKLVHLPQLFREIALKFGIQWKSFDYTFTKQEFEHSQREQKQESVVDNVEKKHSKKSKKKSPALPIENKPTSFARSSIFIADDIVGFVPLVKDSSYKPTLVDEIFANARSQLLSGDKDLGMAMLAELVTIYEAIYGKVNSQTAKFYSLVAKVYQELGFDKEAAIMGRKAVVLSERSCGFDNHDTIAAYMNSAYFELANSQIANSLKLYLRAMQLWTSTYGKDHPALVNLLTNVADSLYYAKDYESALKLFNAALEACSHLNGQASEIAGLFHFKIANVLVSQQKIEKSKDSFVAANEIFQKLLGPDDSMTDQTSKYISNVAMYIEYLKARQAQSKKSPPPTQTVAPNARVSASQASAKVANGNGTGSSKSKKGKKDKSTPQSDPQIANQSVEDILKFIEGKSKPNAKSKSKHTKA.

The stretch at 30–63 (LPSFIDQKGDLKIPSHYEETITDLKLTLTVIPKT) is one TPR 1 repeat. 2 disordered regions span residues 158-203 (TARG…LSRE) and 526-555 (DAAPPSEEEDDAGAEQEKKEEGKAEEDEEE). A compositionally biased stretch (basic and acidic residues) spans 161 to 203 (GEAEKSDTNEEEQEQGKGKVGKPNEKESGETKETDSQPELSRE). The 273-residue stretch at 368-640 (DSSRSQLMLI…RTTPRDIEFI (273 aa)) folds into the Clu domain. Residues 559–595 (EKVLYGLSSDSQKILEDKSFEKPLKLLSEVFHLKPHG) form a TPR 2 repeat. Composition is skewed to basic and acidic residues over residues 686–703 (EGKLEKDGSKGTNSEEKS), 812–831 (EKVEKDRREAEEAEKAKERA), 839–860 (SDDKNQETIENSDAKSKENTES), and 1019–1033 (QREQKQESVVDNVEK). 3 disordered regions span residues 686–707 (EGKLEKDGSKGTNSEEKSQIAL), 812–869 (EKVE…EEQP), and 1019–1050 (QREQKQESVVDNVEKKHSKKSKKKSPALPIEN). A compositionally biased stretch (basic residues) spans 1034 to 1043 (KHSKKSKKKS). 2 TPR repeats span residues 1167–1200 (IAAYMNSAYFELANSQIANSLKLYLRAMQLWTST) and 1209–1242 (VNLLTNVADSLYYAKDYESALKLFNAALEACSHL). 2 stretches are compositionally biased toward polar residues: residues 1314 to 1338 (AQSKKSPPPTQTVAPNARVSASQAS) and 1362 to 1373 (PQSDPQIANQSV). The tract at residues 1314 to 1397 (AQSKKSPPPT…AKSKSKHTKA (84 aa)) is disordered. Residues 1375–1384 (DILKFIEGKS) are compositionally biased toward basic and acidic residues. The segment covering 1386 to 1397 (PNAKSKSKHTKA) has biased composition (basic residues).

It belongs to the CLU family. In terms of assembly, may associate with the eukaryotic translation initiation factor 3 (eIF-3) complex.

Its subcellular location is the cytoplasm. MRNA-binding protein involved in proper cytoplasmic distribution of mitochondria. The chain is Clustered mitochondria protein homolog from Lodderomyces elongisporus (strain ATCC 11503 / CBS 2605 / JCM 1781 / NBRC 1676 / NRRL YB-4239) (Yeast).